Here is a 173-residue protein sequence, read N- to C-terminus: MKRPEKEAVVAELTEQFRNASAVYLTEYRGLTVPQISDLREKLGRDTSYTVAKNTLFRIAAKEAGIEGLDEMLKGPSAVVFVDGDFIEAAKVLRDFAKTNKALIVKGGFADGTVYDAEGAKQLADLKSRPELLAELAGALKGTMSKAAYLFNALPTKVVRTIDALRDKQEKAA.

The protein belongs to the universal ribosomal protein uL10 family. Part of the ribosomal stalk of the 50S ribosomal subunit. The N-terminus interacts with L11 and the large rRNA to form the base of the stalk. The C-terminus forms an elongated spine to which L12 dimers bind in a sequential fashion forming a multimeric L10(L12)X complex.

Forms part of the ribosomal stalk, playing a central role in the interaction of the ribosome with GTP-bound translation factors. The sequence is that of Large ribosomal subunit protein uL10 from Bifidobacterium animalis subsp. lactis (strain AD011).